Reading from the N-terminus, the 120-residue chain is DNA-binding protein HQ_1105A (120 aa).

Residues 1 to 55 (MSETPDDLDELRQQRMEELRDQADGQQSQTSDNTAAAQEAAREKAEAQQEALLKQ) are disordered. Basic and acidic residues predominate over residues 10–23 (ELRQQRMEELRDQA). The segment covering 24–34 (DGQQSQTSDNT) has biased composition (polar residues).

This sequence belongs to the PDCD5 family.

This Haloquadratum walsbyi (strain DSM 16790 / HBSQ001) protein is DNA-binding protein HQ_1105A.